Reading from the N-terminus, the 174-residue chain is Inactive signal peptidase IA (174 aa).

Over 1-7 (MKKVVKY) the chain is Cytoplasmic. Residues 8–28 (LISLILAIIIVLFVQTFVIVG) form a helical membrane-spanning segment. At 29–174 (HVIPNNDMSP…FSKWTVQFKS (146 aa)) the chain is on the extracellular side.

The protein belongs to the peptidase S26 family.

Its subcellular location is the cell membrane. Functionally, catalytically inactive. The protein is Inactive signal peptidase IA (spsA) of Staphylococcus aureus (strain COL).